Reading from the N-terminus, the 464-residue chain is Maturase K (464 aa).

The protein belongs to the intron maturase 2 family. MatK subfamily.

The protein resides in the plastid. Its subcellular location is the chloroplast. Functionally, usually encoded in the trnK tRNA gene intron. Probably assists in splicing its own and other chloroplast group II introns. The polypeptide is Maturase K (Castanea crenata (Japanese chestnut)).